A 460-amino-acid polypeptide reads, in one-letter code: Argininosuccinate lyase (460 aa).

The protein belongs to the lyase 1 family. Argininosuccinate lyase subfamily.

Its subcellular location is the cytoplasm. The catalysed reaction is 2-(N(omega)-L-arginino)succinate = fumarate + L-arginine. It functions in the pathway amino-acid biosynthesis; L-arginine biosynthesis; L-arginine from L-ornithine and carbamoyl phosphate: step 3/3. The sequence is that of Argininosuccinate lyase from Campylobacter jejuni (strain RM1221).